A 177-amino-acid polypeptide reads, in one-letter code: Translation initiation factor IF-3 (177 aa).

The protein belongs to the IF-3 family. Monomer.

The protein resides in the cytoplasm. IF-3 binds to the 30S ribosomal subunit and shifts the equilibrium between 70S ribosomes and their 50S and 30S subunits in favor of the free subunits, thus enhancing the availability of 30S subunits on which protein synthesis initiation begins. This is Translation initiation factor IF-3 from Clostridium perfringens (strain 13 / Type A).